The chain runs to 268 residues: Phosphonates import ATP-binding protein PhnC (268 aa).

Residues 11–254 enclose the ABC transporter domain; it reads LHAEAVTKRF…EVMAIYQRAE (244 aa). An ATP-binding site is contributed by 43-50; sequence GLSGSGKS.

Belongs to the ABC transporter superfamily. Phosphonates importer (TC 3.A.1.9.1) family. In terms of assembly, the complex is composed of two ATP-binding proteins (PhnC), two transmembrane proteins (PhnE) and a solute-binding protein (PhnD).

The protein localises to the cell membrane. The catalysed reaction is phosphonate(out) + ATP + H2O = phosphonate(in) + ADP + phosphate + H(+). Its function is as follows. Part of the ABC transporter complex PhnCDE involved in phosphonates import. Responsible for energy coupling to the transport system. This Nocardia farcinica (strain IFM 10152) protein is Phosphonates import ATP-binding protein PhnC.